The sequence spans 315 residues: 4-hydroxy-3-methylbut-2-enyl diphosphate reductase (315 aa).

Cys-12 is a [4Fe-4S] cluster binding site. Residues His-41 and His-74 each contribute to the (2E)-4-hydroxy-3-methylbut-2-enyl diphosphate site. His-41 and His-74 together coordinate dimethylallyl diphosphate. Isopentenyl diphosphate-binding residues include His-41 and His-74. A [4Fe-4S] cluster-binding site is contributed by Cys-96. Residue His-124 coordinates (2E)-4-hydroxy-3-methylbut-2-enyl diphosphate. Residue His-124 coordinates dimethylallyl diphosphate. His-124 provides a ligand contact to isopentenyl diphosphate. Glu-126 acts as the Proton donor in catalysis. Thr-168 contributes to the (2E)-4-hydroxy-3-methylbut-2-enyl diphosphate binding site. A [4Fe-4S] cluster-binding site is contributed by Cys-198. Positions 226, 227, 228, and 270 each coordinate (2E)-4-hydroxy-3-methylbut-2-enyl diphosphate. Dimethylallyl diphosphate contacts are provided by Ser-226, Ser-227, Asn-228, and Ser-270. Residues Ser-226, Ser-227, Asn-228, and Ser-270 each coordinate isopentenyl diphosphate.

Belongs to the IspH family. It depends on [4Fe-4S] cluster as a cofactor.

The enzyme catalyses isopentenyl diphosphate + 2 oxidized [2Fe-2S]-[ferredoxin] + H2O = (2E)-4-hydroxy-3-methylbut-2-enyl diphosphate + 2 reduced [2Fe-2S]-[ferredoxin] + 2 H(+). It carries out the reaction dimethylallyl diphosphate + 2 oxidized [2Fe-2S]-[ferredoxin] + H2O = (2E)-4-hydroxy-3-methylbut-2-enyl diphosphate + 2 reduced [2Fe-2S]-[ferredoxin] + 2 H(+). It participates in isoprenoid biosynthesis; dimethylallyl diphosphate biosynthesis; dimethylallyl diphosphate from (2E)-4-hydroxy-3-methylbutenyl diphosphate: step 1/1. Its pathway is isoprenoid biosynthesis; isopentenyl diphosphate biosynthesis via DXP pathway; isopentenyl diphosphate from 1-deoxy-D-xylulose 5-phosphate: step 6/6. In terms of biological role, catalyzes the conversion of 1-hydroxy-2-methyl-2-(E)-butenyl 4-diphosphate (HMBPP) into a mixture of isopentenyl diphosphate (IPP) and dimethylallyl diphosphate (DMAPP). Acts in the terminal step of the DOXP/MEP pathway for isoprenoid precursor biosynthesis. This is 4-hydroxy-3-methylbut-2-enyl diphosphate reductase from Pseudomonas fluorescens (strain ATCC BAA-477 / NRRL B-23932 / Pf-5).